The primary structure comprises 302 residues: Lysosomal thioesterase PPT2 (302 aa).

The N-terminal stretch at 1-27 is a signal peptide; the sequence is MLGLCGQRLPAAWVLLLLPFLPLLLLA. Residue N60 is glycosylated (N-linked (GlcNAc...) asparagine). 2 disulfide bridges follow: C109–C117 and C165–C176. S111 serves as the catalytic Nucleophile. Residues N190 and N206 are each glycosylated (N-linked (GlcNAc...) asparagine). Residue D228 is part of the active site. Residue N245 is glycosylated (N-linked (GlcNAc...) asparagine). C276 and C296 are disulfide-bonded. Residue H283 is part of the active site. N-linked (GlcNAc...) asparagine glycosylation is present at N289.

It belongs to the palmitoyl-protein thioesterase family. Broadly expressed, with highest levels in skeletal muscle.

The protein localises to the lysosome. The enzyme catalyses hexadecanoyl-CoA + H2O = hexadecanoate + CoA + H(+). It carries out the reaction S-hexadecanoyl-N-acetylcysteamine + H2O = N-acetylcysteamine + hexadecanoate + H(+). Its function is as follows. Catalyzes the cleavage of thioester bonds from S-palmitoyl-CoA or S-palmitoyl-N-acetylcysteamine (unbranched structures) but does not have activity against palmitoylcysteine or palmitoylated proteins, branched structures or bulky head groups. Conversely, hydrolyzes both long and short chain fatty acyl-CoA substrate. Catalytically inactive due to lack of active site His-283. The protein is Lysosomal thioesterase PPT2 of Homo sapiens (Human).